The following is a 622-amino-acid chain: Dopamine beta-hydroxylase (622 aa).

At 1 to 20 (MQAHLSHQPCWSSLPSPSVR) the chain is on the cytoplasmic side. The chain crosses the membrane as a helical; Signal-anchor for type II membrane protein span at residues 21-41 (EAASMYGTAVAIFLVILVAAL). The Intragranular portion of the chain corresponds to 42–621 (RGSEPPESPF…TVPITTEADA (580 aa)). One can recognise a DOMON domain in the interval 61–177 (GILELSWNVS…DTVHLVYGIL (117 aa)). Residues asparagine 68 and asparagine 188 are each glycosylated (N-linked (GlcNAc...) asparagine). Intrachain disulfides connect cysteine 158–cysteine 600, cysteine 236–cysteine 287, cysteine 273–cysteine 299, cysteine 394–cysteine 507, cysteine 398–cysteine 569, and cysteine 470–cysteine 492. Tyrosine 234 is an active-site residue. Cu(2+)-binding residues include histidine 266 and histidine 267. A Cu(2+)-binding site is contributed by histidine 337. The residue at position 350 (serine 350) is a Phosphoserine; by CaMK. Histidine 416 is an active-site residue. Histidine 416 and histidine 418 together coordinate Cu(2+). An N-linked (GlcNAc...) asparagine glycan is attached at asparagine 476. Methionine 491 contributes to the Cu(2+) binding site. N-linked (GlcNAc...) asparagine glycosylation is present at asparagine 570. The tract at residues 594–622 (EEPTPRCPIRQTQSPANPTVPITTEADAE) is disordered. Over residues 603 to 615 (RQTQSPANPTVPI) the composition is skewed to polar residues.

It belongs to the copper type II ascorbate-dependent monooxygenase family. As to quaternary structure, homotetramer; composed of two disulfide-linked dimers. Requires Cu(2+) as cofactor. Post-translationally, proteolytic cleavage after the membrane-anchor leads to the release of the soluble form. In terms of processing, N-glycosylated. Detected in adrenal gland secretory granules (at protein level). Detected in adrenal gland.

It is found in the cytoplasmic vesicle. The protein localises to the secretory vesicle lumen. Its subcellular location is the secretory vesicle. It localises to the chromaffin granule lumen. The protein resides in the secretory vesicle membrane. It is found in the chromaffin granule membrane. The enzyme catalyses dopamine + 2 L-ascorbate + O2 = (R)-noradrenaline + 2 monodehydro-L-ascorbate radical + H2O. It functions in the pathway catecholamine biosynthesis; (R)-noradrenaline biosynthesis; (R)-noradrenaline from dopamine: step 1/1. Catalyzes the hydroxylation of dopamine to noradrenaline (also known as norepinephrine), and is thus vital for regulation of these neurotransmitters. This is Dopamine beta-hydroxylase (Dbh) from Mus musculus (Mouse).